The chain runs to 399 residues: Aromatic-amino-acid aminotransferase (399 aa).

Substrate contacts are provided by Gly-36, Tyr-67, Trp-132, and Asn-184. Lys-247 carries the post-translational modification N6-(pyridoxal phosphate)lysine. Arg-375 is a binding site for substrate.

Belongs to the class-I pyridoxal-phosphate-dependent aminotransferase family. As to quaternary structure, homodimer. The cofactor is pyridoxal 5'-phosphate.

Its subcellular location is the cytoplasm. The catalysed reaction is an aromatic L-alpha-amino acid + 2-oxoglutarate = an aromatic oxo-acid + L-glutamate. The sequence is that of Aromatic-amino-acid aminotransferase (phhC) from Pseudomonas aeruginosa (strain ATCC 15692 / DSM 22644 / CIP 104116 / JCM 14847 / LMG 12228 / 1C / PRS 101 / PAO1).